A 315-amino-acid polypeptide reads, in one-letter code: Secreted mono- and diacylglycerol lipase LIP2 (315 aa).

Positions 1-21 (MACFRVILYLSVIFFVQCVFA) are cleaved as a signal peptide. A disulfide bridge connects residues C68 and C308. N74 is a glycosylation site (N-linked (GlcNAc...) asparagine). S182 functions as the Nucleophile in the catalytic mechanism. Residue D240 is part of the active site. N265 is a glycosylation site (N-linked (GlcNAc...) asparagine). The active site involves H292.

The protein belongs to the AB hydrolase superfamily. Lipase family. Class 3 subfamily.

It localises to the secreted. The catalysed reaction is a monoacylglycerol + H2O = glycerol + a fatty acid + H(+). It catalyses the reaction a diacylglycerol + H2O = a monoacylglycerol + a fatty acid + H(+). Its function is as follows. Secreted lipase involved in Dandruff and seborrheic dermatitis (D/SD) probably via lipase-mediated breakdown of sebaceous lipids and release of irritating free fatty acids. Shows activity against monoglyceride and diglyceride substrates and generates free oleic acid from the substrates mono- and diolein. Able to cleave the oleic acid from both the 1 and the 2 position of the glycerol backbone as 1,2 isomers of diolein were converted into oleic acid and glycerol. Due to an absence of fatty acid synthase genes in Malassezia species, secretory lipases are essential for the yeast to generate free fatty acids from degradation of sebum and assimilate them as lipid sources for growth. Plays an essential role at the pathogen-host interface during disease progression. Also performs the reverse reaction to build diacylglycerols from monoacylglycerols. This Malassezia restricta (Seborrheic dermatitis infection agent) protein is Secreted mono- and diacylglycerol lipase LIP2.